The sequence spans 506 residues: Sodium-coupled neutral amino acid symporter 2 (506 aa).

A disordered region spans residues 1–23 (MKKAEMGRFSISPDEDSSSYSSN). At 1–76 (MKKAEMGRFS…HPGTTSFGMS (76 aa)) the chain is on the cytoplasmic side. The segment at 1–96 (MKKAEMGRFS…SGILGLSYAM (96 aa)) is regulates protein turnover upon amino acid deprivation. 5 positions are modified to phosphoserine: S10, S12, S21, S22, and S55. Residues 77–96 (VFNLSNAIVGSGILGLSYAM) form a helical membrane-spanning segment. N82 is a Na(+) binding site. At 97–102 (ANTGIA) the chain is on the extracellular side. Residues 103–123 (LFIILLTFVSIFSLYSVHLLL) traverse the membrane as a helical segment. Topologically, residues 124 to 158 (KTANEGGSLLYEQLGYKAFGLVGKLAASGSITMQN) are cytoplasmic. A helical transmembrane segment spans residues 159–177 (IGAMSSYLFIVKYELPLVI). Topologically, residues 178–188 (QALTNIEDKTG) are extracellular. The chain crosses the membrane as a helical span at residues 189-209 (LWYLNGNYLVLLVSLVVILPL). Topologically, residues 210–217 (SLFRNLGY) are cytoplasmic. A helical transmembrane segment spans residues 218-238 (LGYTSGLSLLCMVFFLIVVIC). Residues 239–292 (KKFQVPCPVEAALIINETINTTLTQPTALVPALSHNVTENDSCRPHYFIFNSQT) lie on the Extracellular side of the membrane. C245 and C281 are oxidised to a cystine. N258 and N274 each carry an N-linked (GlcNAc...) asparagine glycan. The helical transmembrane segment at 293–313 (VYAVPILIFSFVCHPAVLPIY) threads the bilayer. Residues 314–329 (EELKDRSRRRMMNVSK) are Cytoplasmic-facing. Residues 330 to 350 (ISFFAMFLMYLLAALFGYLTF) traverse the membrane as a helical segment. Over 351–371 (YEHVESELLHTYSSILGTDIL) the chain is Extracellular. A helical membrane pass occupies residues 372-392 (LLIVRLAVLMAVTLTVPVVIF). Position 386 (T386) interacts with Na(+). Over 393–413 (PIRSSVTHLLCASKDFSWWRH) the chain is Cytoplasmic. Residues 414 to 434 (SLITVSILAFTNLLVIFVPTI) form a helical membrane-spanning segment. Residues 435 to 436 (RD) lie on the Extracellular side of the membrane. The helical transmembrane segment at 437-457 (IFGFIGASAASMLIFILPSAF) threads the bilayer. The Cytoplasmic segment spans residues 458 to 472 (YIKLVKKEPMKSVQK). Residues 473–495 (IGALFFLLSGVLVMTGSMALIVL) form a helical membrane-spanning segment. The Extracellular segment spans residues 496 to 506 (DWVHNAPGGGH).

The protein belongs to the amino acid/polyamine transporter 2 family. Post-translationally, polyubiquitination by NEDD4L regulates the degradation and the activity of SLC38A2. In terms of tissue distribution, ubiquitously expressed. Expressed in neocortex. Widely expressed in the central nervous system with higher concentrations in caudal regions. Expressed by glutamatergic and GABAergic neurons together with astrocytes and other non-neuronal cells in the cerebral cortex (at protein level).

The protein resides in the cell membrane. The enzyme catalyses L-alanine(in) + Na(+)(in) = L-alanine(out) + Na(+)(out). The catalysed reaction is glycine(in) + Na(+)(in) = glycine(out) + Na(+)(out). It catalyses the reaction L-serine(in) + Na(+)(in) = L-serine(out) + Na(+)(out). It carries out the reaction L-proline(in) + Na(+)(in) = L-proline(out) + Na(+)(out). The enzyme catalyses L-methionine(in) + Na(+)(in) = L-methionine(out) + Na(+)(out). The catalysed reaction is L-histidine(in) + Na(+)(in) = L-histidine(out) + Na(+)(out). It catalyses the reaction L-asparagine(in) + Na(+)(in) = L-asparagine(out) + Na(+)(out). It carries out the reaction L-glutamine(in) + Na(+)(in) = L-glutamine(out) + Na(+)(out). The enzyme catalyses L-threonine(in) + Na(+)(in) = L-threonine(out) + Na(+)(out). The catalysed reaction is L-leucine(in) + Na(+)(in) = L-leucine(out) + Na(+)(out). It catalyses the reaction L-phenylalanine(in) + Na(+)(in) = L-phenylalanine(out) + Na(+)(out). With respect to regulation, inhibited by N-methyl-D-glucamine. Inhibited by choline. Allosteric regulation of sodium ions binding by pH. Symporter that cotransports neutral amino acids and sodium ions from the extracellular to the intracellular side of the cell membrane. The transport is pH-sensitive, Li(+)-intolerant, electrogenic, driven by the Na(+) electrochemical gradient and cotransports of neutral amino acids and sodium ions with a stoichiometry of 1:1. May function in the transport of amino acids at the blood-brain barrier. May function in the transport of amino acids in the supply of maternal nutrients to the fetus through the placenta. Maintains a key metabolic glutamine/glutamate balance underpinning retrograde signaling by dendritic release of the neurotransmitter glutamate. Transports L-proline in differentiating osteoblasts for the efficient synthesis of proline-enriched proteins and provides proline essential for osteoblast differentiation and bone formation during bone development. This is Sodium-coupled neutral amino acid symporter 2 from Homo sapiens (Human).